The primary structure comprises 235 residues: Ribosome maturation factor RimM (235 aa).

Residues 1–19 (MKHEEANKEIGGRGAEGQR) show a composition bias toward basic and acidic residues. A disordered region spans residues 1–49 (MKHEEANKEIGGRGAEGQRSKRVGGNSKIQNIQSPAPNPQPIVPNTQSP). The region spanning 150-230 (EDEYHVLDLI…RIEITPPPGL (81 aa)) is the PRC barrel domain.

The protein belongs to the RimM family. As to quaternary structure, binds ribosomal protein uS19.

The protein resides in the cytoplasm. In terms of biological role, an accessory protein needed during the final step in the assembly of 30S ribosomal subunit, possibly for assembly of the head region. Essential for efficient processing of 16S rRNA. May be needed both before and after RbfA during the maturation of 16S rRNA. It has affinity for free ribosomal 30S subunits but not for 70S ribosomes. The polypeptide is Ribosome maturation factor RimM (Nostoc punctiforme (strain ATCC 29133 / PCC 73102)).